The sequence spans 144 residues: Large ribosomal subunit protein uL16c (144 aa).

It belongs to the universal ribosomal protein uL16 family. Part of the 50S ribosomal subunit.

The protein localises to the plastid. It localises to the chloroplast. The protein is Large ribosomal subunit protein uL16c of Chara vulgaris (Common stonewort).